The primary structure comprises 302 residues: Bifunctional ligase/repressor BirA (302 aa).

A DNA-binding region (H-T-H motif) is located at residues Gln-14–Gln-33. Residues Gln-62–Glu-236 enclose the BPL/LPL catalytic domain. Biotin-binding positions include Ser-80–Asn-82, Gln-103, Arg-107–Arg-109, and Lys-167.

This sequence belongs to the biotin--protein ligase family.

It catalyses the reaction biotin + L-lysyl-[protein] + ATP = N(6)-biotinyl-L-lysyl-[protein] + AMP + diphosphate + H(+). Functionally, acts both as a biotin--[acetyl-CoA-carboxylase] ligase and a biotin-operon repressor. In the presence of ATP, BirA activates biotin to form the BirA-biotinyl-5'-adenylate (BirA-bio-5'-AMP or holoBirA) complex. HoloBirA can either transfer the biotinyl moiety to the biotin carboxyl carrier protein (BCCP) subunit of acetyl-CoA carboxylase, or bind to the biotin operator site and inhibit transcription of the operon. The chain is Bifunctional ligase/repressor BirA from Haemophilus influenzae (strain ATCC 51907 / DSM 11121 / KW20 / Rd).